We begin with the raw amino-acid sequence, 147 residues long: Transthyretin (147 aa).

An N-terminal signal peptide occupies residues 1–20 (MASHRLLLLCLAGLVFVSEA). The residue at position 30 (cysteine 30) is a Sulfocysteine. Residue lysine 35 coordinates L-thyroxine. Glutamate 62 is subject to 4-carboxyglutamate; in a patient with Moyamoya disease. The residue at position 72 (serine 72) is a Phosphoserine. Glutamate 74 is a binding site for L-thyroxine. N-linked (GlcNAc...) asparagine glycosylation is present at asparagine 118. Serine 137 contacts L-thyroxine.

The protein belongs to the transthyretin family. As to quaternary structure, homotetramer. Dimer of dimers. In the homotetramer, subunits assemble around a central channel that can accommodate two ligand molecules. Interacts with RBP4. Not glycosylated under normal conditions. Following unfolding, caused for example by variant AMYLD1 'Gly-38', the cryptic Asn-118 site is exposed and glycosylated by STT3B-containing OST complex, leading to its degradation by the ER-associated degradation (ERAD) pathway. Post-translationally, sulfonation of the reactive cysteine Cys-30 enhances the stability of the native conformation of TTR, avoiding misassembly of the protein leading to amyloid formation. Detected in serum and cerebrospinal fluid (at protein level). Highly expressed in choroid plexus epithelial cells. Detected in retina pigment epithelium and liver.

The protein localises to the secreted. It is found in the cytoplasm. In terms of biological role, thyroid hormone-binding protein. Probably transports thyroxine from the bloodstream to the brain. This chain is Transthyretin (TTR), found in Homo sapiens (Human).